A 224-amino-acid chain; its full sequence is Urease accessory protein UreF (224 aa).

Belongs to the UreF family. UreD, UreF and UreG form a complex that acts as a GTP-hydrolysis-dependent molecular chaperone, activating the urease apoprotein by helping to assemble the nickel containing metallocenter of UreC. The UreE protein probably delivers the nickel.

The protein localises to the cytoplasm. In terms of biological role, required for maturation of urease via the functional incorporation of the urease nickel metallocenter. The polypeptide is Urease accessory protein UreF (Klebsiella pneumoniae subsp. pneumoniae (strain ATCC 700721 / MGH 78578)).